The sequence spans 645 residues: Beta-galactosidase BgaA (645 aa).

Arginine 102 contacts substrate. Residue cysteine 106 coordinates Zn(2+). Asparagine 140 serves as a coordination point for substrate. Glutamate 141 (proton donor) is an active-site residue. The Zn(2+) site is built by cysteine 150, cysteine 152, and cysteine 155. Glutamate 312 serves as the catalytic Nucleophile. Substrate contacts are provided by residues tryptophan 320 and 360-363 (EQMH).

The protein belongs to the glycosyl hydrolase 42 family.

It catalyses the reaction Hydrolysis of terminal non-reducing beta-D-galactose residues in beta-D-galactosides.. Hydrolyzes chromogen 5-bromo-4-chloro-3-indolyl-beta-D-galactopyranoside (X-Gal) and p-nitrophenyl-beta-D-galactoside (pNPGal). This is Beta-galactosidase BgaA from Thermus sp.